The following is an 835-amino-acid chain: Microcephalin (835 aa).

Residues 1 to 93 (MAAPILKDVV…AHIDESLFPA (93 aa)) enclose the BRCT 1 domain. Phosphoserine occurs at positions 279, 287, 296, and 333. 2 disordered regions span residues 332 to 376 (LSPT…RKRS) and 417 to 442 (SPDN…PAQF). T335 bears the Phosphothreonine mark. Positions 343 to 361 (LLIHSRPRSSSVKRKRVSH) are enriched in basic residues. The residue at position 548 (S548) is a Phosphoserine. The tract at residues 555-583 (AVDLKSTQNKGTTSKISNSSEGEAQSEHE) is disordered. A compositionally biased stretch (polar residues) spans 559–577 (KSTQNKGTTSKISNSSEGE). BRCT domains are found at residues 640 to 730 (SGRG…PFEL) and 751 to 833 (YRGT…NYLL).

Interacts with CDC27 and maybe other components of the APC/C complex. Interacts with histone variant H2AX under DNA damage conditions.

It is found in the cytoplasm. The protein resides in the cytoskeleton. Its subcellular location is the microtubule organizing center. It localises to the centrosome. Implicated in chromosome condensation and DNA damage induced cellular responses. May play a role in neurogenesis and regulation of the size of the cerebral cortex. The chain is Microcephalin from Pan troglodytes (Chimpanzee).